The sequence spans 205 residues: Small ribosomal subunit protein uS4 (205 aa).

The segment at 25-48 (KTIEARPTPPGQHGAKNTRRKKSD) is disordered. The S4 RNA-binding domain occupies 94–157 (RRLDNVVFRA…TKLPIVVETL (64 aa)).

It belongs to the universal ribosomal protein uS4 family. In terms of assembly, part of the 30S ribosomal subunit. Contacts protein S5. The interaction surface between S4 and S5 is involved in control of translational fidelity.

One of the primary rRNA binding proteins, it binds directly to 16S rRNA where it nucleates assembly of the body of the 30S subunit. Functionally, with S5 and S12 plays an important role in translational accuracy. This Methylobacillus flagellatus (strain ATCC 51484 / DSM 6875 / VKM B-1610 / KT) protein is Small ribosomal subunit protein uS4.